A 189-amino-acid polypeptide reads, in one-letter code: Recombination protein RecR (189 aa).

The segment at 48 to 63 (CQTCFHLSAEPTCEIC) adopts a C4-type zinc-finger fold. The region spanning 71 to 165 (GMLCVVADSR…EVSRIAYGLP (95 aa)) is the Toprim domain.

This sequence belongs to the RecR family.

In terms of biological role, may play a role in DNA repair. It seems to be involved in an RecBC-independent recombinational process of DNA repair. It may act with RecF and RecO. The polypeptide is Recombination protein RecR (Synechococcus sp. (strain CC9311)).